Consider the following 320-residue polypeptide: Membrane protein insertase YidC 2 (320 aa).

A signal peptide spans 1 to 23 (MKNLKKKLTLTGLMTAGLLFLSG). Cys24 is lipidated: N-palmitoyl cysteine. A lipid anchor (S-diacylglycerol cysteine) is attached at Cys24. A run of 5 helical transmembrane segments spans residues 68 to 88 (YGWG…PLGL), 142 to 162 (MLSS…IALY), 178 to 198 (GIPL…LYFI), 217 to 237 (AMLI…PAGV), and 239 to 259 (LYWA…TFIM). Residues 270 to 320 (EFTKNPPKINNEGLKDVTPTSVQENFKEITSERNEKERKSGGRNAGKQNRK) are disordered. A compositionally biased stretch (basic and acidic residues) spans 294-309 (NFKEITSERNEKERKS).

The protein belongs to the OXA1/ALB3/YidC family. Type 2 subfamily.

The protein resides in the cell membrane. In terms of biological role, required for the insertion and/or proper folding and/or complex formation of integral membrane proteins into the membrane. Involved in integration of membrane proteins that insert both dependently and independently of the Sec translocase complex, as well as at least some lipoproteins. The polypeptide is Membrane protein insertase YidC 2 (Lactococcus lactis subsp. lactis (strain IL1403) (Streptococcus lactis)).